The following is a 376-amino-acid chain: MNRSFHKSQTLRFYDCSAVEVKSKFGAEFRRFSLDRHKPGKFEDFYKLVVHTHHISNSDVTIGYADVHGDLLPINNDDNFCKAVSSANPLLRVFIQKREEAERGSLGAGSLCRRRRALGALRDEGPRRRAHLDIGLPRDFRPVSSIIDVDLVPETHRRVRLHRHGCEKPLGFYIRDGASVRVTPHGLEKVPGIFISRMVPGGLAESTGLLAVNDEVLEVNGIEVAGKTLDQVTDMMIANSHNLIVTVKPANQRNNVVRGGRALGSSGPPSDGTAGFVGPPAPRVLQNFHPDEAESDEDNDVVIEGTLEPARPPQTPGAPAGSLSRVNGAGLAQRLQRDLALDGGLQRLLSSLRADPRHSLALPPGGVEEHGPAVTL.

Positions 18–98 (AVEVKSKFGA…PLLRVFIQKR (81 aa)) constitute a PB1 domain. An interaction with PARD3 and CDC42 region spans residues 127–254 (RRRAHLDIGL…VTVKPANQRN (128 aa)). Residues 134–151 (IGLPRDFRPVSSIIDVDL) enclose the Pseudo-CRIB domain. The PDZ domain maps to 158–251 (RVRLHRHGCE…NLIVTVKPAN (94 aa)). The disordered stretch occupies residues 356–376 (PRHSLALPPGGVEEHGPAVTL). The span at 367–376 (VEEHGPAVTL) shows a compositional bias: basic and acidic residues.

This sequence belongs to the PAR6 family. Interacts with PARD3. Interacts with GTP-bound forms of CDC42, RHOQ/TC10 and RAC1. Interacts with the N-terminal part of PRKCI and PRKCZ. As to expression, widely expressed, with a higher expression in fetal and adult kidney.

The protein resides in the cytoplasm. The protein localises to the cell membrane. Its subcellular location is the cell junction. It localises to the tight junction. Functionally, adapter protein involved in asymmetrical cell division and cell polarization processes. May play a role in the formation of epithelial tight junctions. The PARD6-PARD3 complex links GTP-bound Rho small GTPases to atypical protein kinase C proteins. The sequence is that of Partitioning defective 6 homolog gamma (PARD6G) from Homo sapiens (Human).